A 308-amino-acid polypeptide reads, in one-letter code: Porphobilinogen deaminase (308 aa).

Residue Cys-243 is modified to S-(dipyrrolylmethanemethyl)cysteine.

Belongs to the HMBS family. Monomer. Dipyrromethane is required as a cofactor.

It carries out the reaction 4 porphobilinogen + H2O = hydroxymethylbilane + 4 NH4(+). It functions in the pathway porphyrin-containing compound metabolism; protoporphyrin-IX biosynthesis; coproporphyrinogen-III from 5-aminolevulinate: step 2/4. Functionally, tetrapolymerization of the monopyrrole PBG into the hydroxymethylbilane pre-uroporphyrinogen in several discrete steps. The polypeptide is Porphobilinogen deaminase (Nitrosomonas europaea (strain ATCC 19718 / CIP 103999 / KCTC 2705 / NBRC 14298)).